Consider the following 405-residue polypeptide: Serine/threonine transporter SstT (405 aa).

The next 8 membrane-spanning stretches (helical) occupy residues 13-33, 43-63, 82-102, 141-161, 185-205, 217-237, 298-318, and 339-359; these read GGSL…LAGF, FLGD…VFVL, IILL…LMSF, ALIN…GIAL, FVIC…IAQT, LGVL…LIVF, MAGA…TLGI, and ASGV…LFGI.

This sequence belongs to the dicarboxylate/amino acid:cation symporter (DAACS) (TC 2.A.23) family.

It localises to the cell inner membrane. The enzyme catalyses L-serine(in) + Na(+)(in) = L-serine(out) + Na(+)(out). The catalysed reaction is L-threonine(in) + Na(+)(in) = L-threonine(out) + Na(+)(out). Involved in the import of serine and threonine into the cell, with the concomitant import of sodium (symport system). This chain is Serine/threonine transporter SstT, found in Shewanella amazonensis (strain ATCC BAA-1098 / SB2B).